Consider the following 503-residue polypeptide: Aspartyl/glutamyl-tRNA(Asn/Gln) amidotransferase subunit B (503 aa).

Belongs to the GatB/GatE family. GatB subfamily. In terms of assembly, heterotrimer of A, B and C subunits.

The catalysed reaction is L-glutamyl-tRNA(Gln) + L-glutamine + ATP + H2O = L-glutaminyl-tRNA(Gln) + L-glutamate + ADP + phosphate + H(+). It catalyses the reaction L-aspartyl-tRNA(Asn) + L-glutamine + ATP + H2O = L-asparaginyl-tRNA(Asn) + L-glutamate + ADP + phosphate + 2 H(+). Its function is as follows. Allows the formation of correctly charged Asn-tRNA(Asn) or Gln-tRNA(Gln) through the transamidation of misacylated Asp-tRNA(Asn) or Glu-tRNA(Gln) in organisms which lack either or both of asparaginyl-tRNA or glutaminyl-tRNA synthetases. The reaction takes place in the presence of glutamine and ATP through an activated phospho-Asp-tRNA(Asn) or phospho-Glu-tRNA(Gln). The sequence is that of Aspartyl/glutamyl-tRNA(Asn/Gln) amidotransferase subunit B from Rhodococcus erythropolis (strain PR4 / NBRC 100887).